The primary structure comprises 236 residues: Biosynthetic peptidoglycan transglycosylase (236 aa).

The chain crosses the membrane as a helical span at residues 12–31; sequence ALFWFAAGSIVLVLVFRWVP.

This sequence belongs to the glycosyltransferase 51 family.

The protein localises to the cell inner membrane. The enzyme catalyses [GlcNAc-(1-&gt;4)-Mur2Ac(oyl-L-Ala-gamma-D-Glu-L-Lys-D-Ala-D-Ala)](n)-di-trans,octa-cis-undecaprenyl diphosphate + beta-D-GlcNAc-(1-&gt;4)-Mur2Ac(oyl-L-Ala-gamma-D-Glu-L-Lys-D-Ala-D-Ala)-di-trans,octa-cis-undecaprenyl diphosphate = [GlcNAc-(1-&gt;4)-Mur2Ac(oyl-L-Ala-gamma-D-Glu-L-Lys-D-Ala-D-Ala)](n+1)-di-trans,octa-cis-undecaprenyl diphosphate + di-trans,octa-cis-undecaprenyl diphosphate + H(+). It participates in cell wall biogenesis; peptidoglycan biosynthesis. Functionally, peptidoglycan polymerase that catalyzes glycan chain elongation from lipid-linked precursors. The chain is Biosynthetic peptidoglycan transglycosylase from Pseudomonas putida (strain W619).